A 498-amino-acid chain; its full sequence is ATP synthase subunit beta, chloroplastic (498 aa).

An ATP-binding site is contributed by glycine 172–threonine 179.

The protein belongs to the ATPase alpha/beta chains family. In terms of assembly, F-type ATPases have 2 components, CF(1) - the catalytic core - and CF(0) - the membrane proton channel. CF(1) has five subunits: alpha(3), beta(3), gamma(1), delta(1), epsilon(1). CF(0) has four main subunits: a(1), b(1), b'(1) and c(9-12).

It localises to the plastid. The protein localises to the chloroplast thylakoid membrane. It carries out the reaction ATP + H2O + 4 H(+)(in) = ADP + phosphate + 5 H(+)(out). Its function is as follows. Produces ATP from ADP in the presence of a proton gradient across the membrane. The catalytic sites are hosted primarily by the beta subunits. The sequence is that of ATP synthase subunit beta, chloroplastic from Lactuca sativa (Garden lettuce).